The chain runs to 588 residues: Phosphoinositide phosphatase SAC8 (588 aa).

The interval 37 to 56 is disordered; that stretch reads FSVNRRDGNIKPLDENASSG. The span at 40 to 50 shows a compositional bias: basic and acidic residues; the sequence is NRRDGNIKPLD. Residues 129 to 455 form the SAC domain; it reads LQALETTPGL…GDEVSLQYAG (327 aa). The Phosphatase catalytic core motif lies at 390–401; that stretch reads RSNCIDCLDRTN. A run of 2 helical transmembrane segments spans residues 524 to 544 and 555 to 575; these read SFLPVASALLIGGVTVTSFTI and LASALWAGVTAGVVAMIKANG.

In terms of tissue distribution, ubiquitous with a higher level of expression in young seedlings than in other tissues.

Its subcellular location is the endoplasmic reticulum membrane. Its function is as follows. Phosphoinositide phosphatase that hydrolyzes PtdIns(3)P and PtdIns(4)P. This chain is Phosphoinositide phosphatase SAC8 (SAC8), found in Arabidopsis thaliana (Mouse-ear cress).